The chain runs to 182 residues: Putative CTD phosphatase-like protein 355R (182 aa).

The FCP1 homology domain maps to 1-180; that stretch reads MKNIFLDLDN…MRLKDVLNRH (180 aa).

The protein belongs to the IIV-6 355R family.

Its function is as follows. May function as a phosphatase. This chain is Putative CTD phosphatase-like protein 355R, found in Invertebrate iridescent virus 6 (IIV-6).